Here is a 356-residue protein sequence, read N- to C-terminus: Pyruvate dehydrogenase E1 component subunit beta, mitochondrial (356 aa).

A mitochondrion-targeting transit peptide spans 1–25 (MLSSILKKIQPSLLVNFRIITRTYA). A thiamine diphosphate-binding site is contributed by Glu85. K(+) is bound by residues Ile138, Ala186, Ile187, Asp189, and Asn191.

As to quaternary structure, tetramer of 2 alpha and 2 beta subunits. Thiamine diphosphate is required as a cofactor.

Its subcellular location is the mitochondrion matrix. The catalysed reaction is N(6)-[(R)-lipoyl]-L-lysyl-[protein] + pyruvate + H(+) = N(6)-[(R)-S(8)-acetyldihydrolipoyl]-L-lysyl-[protein] + CO2. Its function is as follows. The pyruvate dehydrogenase complex catalyzes the overall conversion of pyruvate to acetyl-CoA and CO(2). It contains multiple copies of three enzymatic components: pyruvate dehydrogenase (E1), dihydrolipoamide acetyltransferase (E2) and lipoamide dehydrogenase (E3). This is Pyruvate dehydrogenase E1 component subunit beta, mitochondrial (pdhB) from Dictyostelium discoideum (Social amoeba).